The sequence spans 410 residues: MGAQVRLPPGEPCREGYVLSLVCPNSSQAWCEITNVSQLLASPVLYTDLNYSINNLSISANVENKYSLYVGLVLAVSSSIFIGSSFILKKKGLLQLASKGFTRAGQGGHSYLKEWLWWVGLLSMGAGEAANFAAYAFAPATLVTPLGALSVLISAILSSYFLNEHLNIHGKIGCILSILGSTVMVIHAPQEEEVTSLHEMEMKLRDPGFISFAVIITVISLVLILIVAPKKGQTNILVYISICSLIGAFSVSSVKGLGIAIKELIEWKPVYKHPLVFVLLAVLVLSVTTQINYLNKALDTFNTSLVTPIYYVFFTSMVVTCSAILFQEWYGMTAGDIIGTLSGFFTIIIGIFLLHAFKNTDITWSELTSTAKKEAVSLNVNENNYVLLENLECSAPGYNDDVTLFSRTDD.

Over 1–67 (MGAQVRLPPG…ISANVENKYS (67 aa)) the chain is Extracellular. N25, N35, N50, and N55 each carry an N-linked (GlcNAc...) asparagine glycan. The helical transmembrane segment at 68-88 (LYVGLVLAVSSSIFIGSSFIL) threads the bilayer. The Cytoplasmic segment spans residues 89-114 (KKKGLLQLASKGFTRAGQGGHSYLKE). The helical transmembrane segment at 115 to 135 (WLWWVGLLSMGAGEAANFAAY) threads the bilayer. Position 136 (A136) is a topological domain, extracellular. A helical membrane pass occupies residues 137–157 (FAPATLVTPLGALSVLISAIL). The Cytoplasmic portion of the chain corresponds to 158 to 165 (SSYFLNEH). A helical membrane pass occupies residues 166-186 (LNIHGKIGCILSILGSTVMVI). Residues 187 to 207 (HAPQEEEVTSLHEMEMKLRDP) are Extracellular-facing. A helical transmembrane segment spans residues 208-228 (GFISFAVIITVISLVLILIVA). The Cytoplasmic segment spans residues 229–233 (PKKGQ). The helical transmembrane segment at 234–254 (TNILVYISICSLIGAFSVSSV) threads the bilayer. Topologically, residues 255–273 (KGLGIAIKELIEWKPVYKH) are extracellular. A helical membrane pass occupies residues 274 to 294 (PLVFVLLAVLVLSVTTQINYL). Residues 295–305 (NKALDTFNTSL) are Cytoplasmic-facing. Residues 306 to 326 (VTPIYYVFFTSMVVTCSAILF) traverse the membrane as a helical segment. Residues 327–336 (QEWYGMTAGD) lie on the Extracellular side of the membrane. A helical transmembrane segment spans residues 337–357 (IIGTLSGFFTIIIGIFLLHAF). The Cytoplasmic segment spans residues 358–410 (KNTDITWSELTSTAKKEAVSLNVNENNYVLLENLECSAPGYNDDVTLFSRTDD).

The protein belongs to the NIPA family. As to expression, expressed in the pancreatic islets.

The protein resides in the golgi apparatus membrane. It catalyses the reaction Mg(2+)(in) = Mg(2+)(out). In terms of biological role, acts as a Mg(2+) transporter. Can also transport other divalent cations such as Fe(2+), Sr(2+), Ba(2+), Mn(2+), Cu(2+) and Co(2+) but to a much less extent than Mg(2+). This chain is Magnesium transporter NIPA3 (NIPAL1), found in Homo sapiens (Human).